The following is a 1331-amino-acid chain: Xanthine dehydrogenase/oxidase (1331 aa).

The 2Fe-2S ferredoxin-type domain occupies 4–91; it reads DELVFFVNGK…HVAVTTVEGI (88 aa). Positions 43, 48, 51, 73, 113, 116, 148, and 150 each coordinate [2Fe-2S] cluster. Positions 229 to 412 constitute an FAD-binding PCMH-type domain; it reads FEGERVTWIQ…LSIEIPYSRE (184 aa). Residues 257–264, Phe-335, 345–349, Asp-358, Leu-402, and Lys-420 each bind FAD; these read LVVGNTEI and SIGGN. Cys-534 and Cys-991 are disulfide-bonded. 2 residues coordinate Mo-molybdopterin: Gln-766 and Phe-797. The substrate site is built by Glu-801 and Arg-879. Residue Arg-911 participates in Mo-molybdopterin binding. 2 residues coordinate substrate: Phe-913 and Thr-1009. Ala-1078 contacts Mo-molybdopterin. The active-site Proton acceptor is Glu-1260.

It belongs to the xanthine dehydrogenase family. Homodimer. Interacts with BTN1A1. The cofactor is FAD. Mo-molybdopterin serves as cofactor. Requires [2Fe-2S] cluster as cofactor. In terms of processing, subject to partial proteolysis; this alters the enzyme from the dehydrogenase form (D) to the oxidase form (O). Contains sulfhydryl groups that are easily oxidized (in vitro); this alters the enzyme from the dehydrogenase form (D) to the oxidase form (O).

It localises to the cytoplasm. The protein resides in the peroxisome. Its subcellular location is the secreted. It carries out the reaction xanthine + NAD(+) + H2O = urate + NADH + H(+). The catalysed reaction is hypoxanthine + NAD(+) + H2O = xanthine + NADH + H(+). It catalyses the reaction xanthine + O2 + H2O = urate + H2O2. With respect to regulation, can be converted from the dehydrogenase form (D) to the oxidase form (O) irreversibly by proteolysis or reversibly through the oxidation of sulfhydryl groups. Functionally, key enzyme in purine degradation. Catalyzes the oxidation of hypoxanthine to xanthine. Catalyzes the oxidation of xanthine to uric acid. Contributes to the generation of reactive oxygen species. This is Xanthine dehydrogenase/oxidase (XDH) from Felis catus (Cat).